Here is a 379-residue protein sequence, read N- to C-terminus: Very late expression factor 1 (379 aa).

One can recognise a Tyr recombinase domain in the interval 169–348 (VIDTILNFIN…YNIGLDETSS (180 aa)). Residues arginine 210, lysine 239, arginine 303, and histidine 326 contribute to the active site. The active-site O-(3'-phospho-DNA)-tyrosine intermediate is the tyrosine 335. Residues 346–358 (TSSEEENNNDDDD) are compositionally biased toward acidic residues. The tract at residues 346 to 379 (TSSEEENNNDDDDAQHNRNSSGSSGESLLYYRNE) is disordered. Over residues 362–379 (NRNSSGSSGESLLYYRNE) the composition is skewed to low complexity.

This sequence belongs to the 'phage' integrase family.

Its function is as follows. Plays a role in nucleocapsid assembly and serves an essential function during the final stages of the DNA packaging process. Participates in the processing of branched DNA molecules at the late stages of viral genome replication. This Lepidoptera (butterflies and moths) protein is Very late expression factor 1 (VLF-1).